We begin with the raw amino-acid sequence, 108 residues long: ATP-dependent Clp protease adapter protein ClpS (108 aa).

Over residues 1 to 15 (MPHESSPDSQHEHGV) the composition is skewed to basic and acidic residues. Residues 1–22 (MPHESSPDSQHEHGVAVEAARP) are disordered.

It belongs to the ClpS family. In terms of assembly, binds to the N-terminal domain of the chaperone ClpA.

Involved in the modulation of the specificity of the ClpAP-mediated ATP-dependent protein degradation. The polypeptide is ATP-dependent Clp protease adapter protein ClpS (Stenotrophomonas maltophilia (strain K279a)).